The primary structure comprises 948 residues: MAPPPDTSGSCSAFHECERIFAQWGYPFQDYSESFRQSLDTVCRCSRFFLGVVKRDAHVIPLLASLFEGQTPERNPSADLQQRVAEVADRNGLMRVLRQWRNREMAIIAWQDICGLLDIDSVLTRISETAESAIRTALDWLFDDACRRWGVPRRKDGSAQSLVVLGMGKLGGYELNFSSDIDLVFAYVEDGELPGRNGATYAEFYTRLAQSLVHVLDAVTEDGFVFRVDVRLRPFGESGPLVVSFDSCERYYQAQARDWERYAMVKVRAVGGDAKDGREFERFFHPFVYRRYLDYRVFGELRSLKARIMAELRRKDRGDNIKLGAGGIREIEFIGQAFQLIRGGRNVELQDRRILVVLERLGRLRLLEHGTASFLCAAYRFLRKVENRLQQYEDKQTHELPVSEERRGLLAFSMGFESWEGFLHRLDEVRRRVHEIFTEVIAEPPQPARGEPLLDGGEAELSQALAGFDGAAEAMTGALVKFRASAPVRRLGAGARAELQRVIGKLLAELAAFRVSDPVGVLGRILELFESIAGRGVYFSLLAENPSALSQLVRLAAASPWIVRLIAGAPILLDELLDPRTLYSPLTRESLGREADILFSSLAPDDDEQLMLRLRQFKAAHQLRIAAADIMNVIPVMVVSDYLTDLAEVVIERVLRLAWKFAAARHGIPPVEAETSVDFPGFGIIAYGKLGGIELGYGSDLDLVFLYDGVASDAVTDGPRPISAAEFYARVVQRMVSLLTADMPGGALYEVDLRLRPSGSSGLLVSKADAYENYQLHQAWTWERQALVRARFVAGDPKVGARFDAIRRNVLCRERDSRQVRLDVRSMREKMREHLADRRPGVFDLKQGVGGIADIEFIVQFGVLISAAKHCEITRWTDTVRLLDSLRAINFLELGQADRLRCAYCDYRGRVHRLALQEMPALAASSEFPGHRTAVEAVWKQIIEAPVF.

The tract at residues 1-445 (MAPPPDTSGS…IFTEVIAEPP (445 aa)) is adenylyl removase. Residues 451 to 948 (EPLLDGGEAE…WKQIIEAPVF (498 aa)) form an adenylyl transferase region.

The protein belongs to the GlnE family. It depends on Mg(2+) as a cofactor.

It catalyses the reaction [glutamine synthetase]-O(4)-(5'-adenylyl)-L-tyrosine + phosphate = [glutamine synthetase]-L-tyrosine + ADP. The enzyme catalyses [glutamine synthetase]-L-tyrosine + ATP = [glutamine synthetase]-O(4)-(5'-adenylyl)-L-tyrosine + diphosphate. Involved in the regulation of glutamine synthetase GlnA, a key enzyme in the process to assimilate ammonia. When cellular nitrogen levels are high, the C-terminal adenylyl transferase (AT) inactivates GlnA by covalent transfer of an adenylyl group from ATP to specific tyrosine residue of GlnA, thus reducing its activity. Conversely, when nitrogen levels are low, the N-terminal adenylyl removase (AR) activates GlnA by removing the adenylyl group by phosphorolysis, increasing its activity. The regulatory region of GlnE binds the signal transduction protein PII (GlnB) which indicates the nitrogen status of the cell. The protein is Bifunctional glutamine synthetase adenylyltransferase/adenylyl-removing enzyme of Methylococcus capsulatus (strain ATCC 33009 / NCIMB 11132 / Bath).